A 235-amino-acid polypeptide reads, in one-letter code: Superoxide dismutase [Mn] 3.1, mitochondrial (235 aa).

A mitochondrion-targeting transit peptide spans 1 to 31; it reads MALRTLASKKVLSFPFGGAGRPLAAAASARG. Residues H59, H107, D196, and H200 each coordinate Mn(2+).

This sequence belongs to the iron/manganese superoxide dismutase family. In terms of assembly, homotetramer. The cofactor is Mn(2+).

It localises to the mitochondrion matrix. The catalysed reaction is 2 superoxide + 2 H(+) = H2O2 + O2. Its function is as follows. Destroys superoxide anion radicals which are normally produced within the cells and which are toxic to biological systems. The polypeptide is Superoxide dismutase [Mn] 3.1, mitochondrial (SODA.4) (Zea mays (Maize)).